The chain runs to 111 residues: Inner membrane protein H108R (111 aa).

Residues leucine 10–leucine 32 traverse the membrane as a helical segment. The N-linked (GlcNAc...) asparagine; by host glycan is linked to asparagine 65.

The protein belongs to the asfivirus H108R family.

It localises to the virion membrane. This chain is Inner membrane protein H108R, found in African swine fever virus (isolate Tick/Malawi/Lil 20-1/1983) (ASFV).